A 270-amino-acid chain; its full sequence is Putative carboxymethylenebutenolidase (270 aa).

Catalysis depends on residues Cys-147, Asp-204, and His-236.

It belongs to the dienelactone hydrolase family.

It catalyses the reaction 2-(5-oxo-2,5-dihydrofuran-2-ylidene)acetate + H2O = 4-oxohex-2-enedioate + H(+). The protein is Putative carboxymethylenebutenolidase (ysgA) of Salmonella typhimurium (strain LT2 / SGSC1412 / ATCC 700720).